The chain runs to 207 residues: Ras-related protein Rab-7a (207 aa).

T2 bears the N-acetylthreonine mark. GTP is bound by residues S17, G18, V19, G20, K21, T22, S23, S34, N35, Y37, and T40. T22 contacts Mg(2+). The Switch 1 motif lies at Y28 to I41. The Mg(2+) site is built by T40 and D63. G66 serves as a coordination point for GTP. The Switch 2 signature appears at Q67–D82. S72 bears the Phosphoserine mark. Positions 125, 126, 128, 156, and 157 each coordinate GTP. Residues K191 and K194 each participate in a glycyl lysine isopeptide (Lys-Gly) (interchain with G-Cter in ubiquitin) cross-link. Residues C205 and C207 are each lipidated (S-geranylgeranyl cysteine). C207 bears the Cysteine methyl ester mark.

Belongs to the small GTPase superfamily. Rab family. As to quaternary structure, interacts with NTRK1/TRKA. Interacts with RILP. Interacts with PSMA7. Interacts with RNF115. Interacts with and FYCO1. Interacts with the PIK3C3/VPS34-PIK3R4 complex. The GTP-bound form interacts with OSBPL1A. The GTP-bound form interacts with RAC1. Interacts with CLN3. Interacts with CHM, the substrate-binding subunit of the Rab geranylgeranyltransferase complex. Interacts with C9orf72. Does not interact with HPS4 and the BLOC-3 complex (heterodimer of HPS1 and HPS4). Interacts with CLN5. Interacts with PLEKHM1 (via N- and C-terminus). Interacts with PRPH; the interaction is direct. Interacts with VPS13A. The GDP-bound form interacts with RIMOC1. Interacts with the MON1A-CCZ1B complex and this interaction is enhanced in the presence of RIMOC1. Interacts with VPS39 and VPS41. Forms a ternary complex with LAMP2 and RUFY4; the interaction with LAMP2 is mediated by RUFY4 (via RUN and coiled coil domains). It depends on Mg(2+) as a cofactor. In terms of processing, deubiquitination at Lys-191 and Lys-194 by USP32. Post-translationally, phosphorylated at Ser-72 by LRRK1; phosphorylation is dependent on protein kinase C (PKC) activation of LRRK1. Prenylated. Prenylation is required for association with cellular membranes. As to expression, expressed in osteoclasts and in neurons.

It localises to the cytoplasmic vesicle. The protein resides in the phagosome membrane. The protein localises to the late endosome membrane. Its subcellular location is the lysosome membrane. It is found in the melanosome membrane. It localises to the autophagosome membrane. The protein resides in the lipid droplet. The protein localises to the endosome membrane. Its subcellular location is the mitochondrion membrane. It carries out the reaction GTP + H2O = GDP + phosphate + H(+). Its activity is regulated as follows. Regulated by guanine nucleotide exchange factors (GEFs) which promote the exchange of bound GDP for free GTP. Regulated by GTPase activating proteins (GAPs) which increase the GTP hydrolysis activity. Inhibited by GDP dissociation inhibitors (GDIs). Its function is as follows. The small GTPases Rab are key regulators of intracellular membrane trafficking, from the formation of transport vesicles to their fusion with membranes. Rabs cycle between an inactive GDP-bound form and an active GTP-bound form that is able to recruit to membranes different sets of downstream effectors directly responsible for vesicle formation, movement, tethering and fusion. In its active state, RAB7A binds to a variety of effector proteins playing a key role in the regulation of endo-lysosomal trafficking. Governs early-to-late endosomal maturation, microtubule minus-end as well as plus-end directed endosomal migration and positioning, and endosome-lysosome transport through different protein-protein interaction cascades. Also plays a central role in growth-factor-mediated cell signaling, nutrient-transporter-mediated nutrient uptake, neurotrophin transport in the axons of neurons and lipid metabolism. Also involved in regulation of some specialized endosomal membrane trafficking, such as maturation of melanosomes, pathogen-induced phagosomes (or vacuoles) and autophagosomes. Plays a role in the maturation and acidification of phagosomes that engulf pathogens, such as S.aureus and Mycobacteria. Plays a role in the fusion of phagosomes with lysosomes. In concert with RAC1, plays a role in regulating the formation of RBs (ruffled borders) in osteoclasts. Controls the endosomal trafficking and neurite outgrowth signaling of NTRK1/TRKA. Regulates the endocytic trafficking of the EGF-EGFR complex by regulating its lysosomal degradation. Involved in the ADRB2-stimulated lipolysis through lipophagy, a cytosolic lipase-independent autophagic pathway. Required for the exosomal release of SDCBP, CD63 and syndecan. Required for vesicular trafficking and cell surface expression of ACE2. May play a role in PRPH neuronal intermediate filament assembly. The protein is Ras-related protein Rab-7a of Rattus norvegicus (Rat).